A 58-amino-acid polypeptide reads, in one-letter code: Small ribosomal subunit protein eS27 (58 aa).

Zn(2+)-binding residues include C10, C13, C29, and C32. The segment at C10–C32 adopts a C4-type zinc-finger fold.

This sequence belongs to the eukaryotic ribosomal protein eS27 family. As to quaternary structure, part of the 30S ribosomal subunit. Zn(2+) is required as a cofactor.

The chain is Small ribosomal subunit protein eS27 from Archaeoglobus fulgidus (strain ATCC 49558 / DSM 4304 / JCM 9628 / NBRC 100126 / VC-16).